An 804-amino-acid polypeptide reads, in one-letter code: Endoplasmin (804 aa).

The N-terminal stretch at M1–A21 is a signal peptide. The SRT pseudosubstrate motif motif lies at S42–T44. N-linked (GlcNAc...) asparagine glycosylation occurs at N62. S64 bears the Phosphoserine mark. N107 carries N-linked (GlcNAc...) asparagine glycosylation. ATP is bound by residues N107, D149, and N162. At K168 the chain carries N6-(2-hydroxyisobutyryl)lysine. A Phosphoserine modification is found at S172. F199 contacts ATP. The N-linked (GlcNAc...) asparagine glycan is linked to N217. The disordered stretch occupies residues T288–T323. Over residues V289 to D317 the composition is skewed to acidic residues. Phosphoserine occurs at positions 306 and 403. N6-succinyllysine is present on K404. N445 carries an N-linked (GlcNAc...) asparagine glycan. S447 bears the Phosphoserine mark. N6-acetyllysine is present on K479. N481 and N502 each carry an N-linked (GlcNAc...) asparagine glycan. At K633 the chain carries N6-succinyllysine. Residues D750–L804 are disordered. Residues E757–E792 are compositionally biased toward acidic residues. T786 carries the post-translational modification Phosphothreonine. Positions T793 to L804 are enriched in basic and acidic residues. The Prevents secretion from ER signature appears at K801–L804.

It belongs to the heat shock protein 90 family. As to quaternary structure, homodimer; disulfide-linked. Component of an EIF2 complex at least composed of CELF1/CUGBP1, CALR, CALR3, EIF2S1, EIF2S2, HSP90B1 and HSPA5. Part of a large chaperone multiprotein complex comprising DNAJB11, HSP90B1, HSPA5, HYOU, PDIA2, PDIA4, PDIA6, PPIB, SDF2L1, UGGT1 and very small amounts of ERP29, but not, or at very low levels, CALR nor CANX. Interacts with AIMP1; regulates its retention in the endoplasmic reticulum. Hyperglycosylated form interacts with OS9; promoting its degradation by the endoplasmic reticulum associated degradation (ERAD). Interacts with CNPY3. This interaction is disrupted in the presence of ATP. Interacts with TLR4 and TLR9, but not with TLR3. Interacts with MZB1 in a calcium-dependent manner. Interacts with METTL23. Interacts with IL1B; the interaction facilitates cargo translocation into the ERGIC. Interacts with EIF2AK3. Post-translationally, phosphorylated by CK2. In terms of processing, N-glycosylated cotranslationally at Asn-217 by STT3A-containing OST-A complex: this glycosylation is constitutive. In response to various stress, 5 additional facultative sites (Asn-62, Asn-107, Asn-445, Asn-481 and Asn-502) can be glycosylated post-translationally by STT3B-containing OST-B complex, leading to a hyperglycosylated form that is degraded by the ER-associated degradation (ERAD) pathway. In normal conditions, the OST-A complex together with CCDC134 prevent glycosylation at facultative sites during protein folding, thereby preventing hyperglycosylation. Mechanistically, nascent HSP90B1 is tethered during translation to a specialized CCDC134-containing translocon that forms a microenvironment for its folding, in which STT3A associates with the SRT pseudosubstrate motif, and prevents access to facultative glycosylation sites until folding is completed, rendering its facultative sites inaccessible to the OST-B complex.

It localises to the endoplasmic reticulum lumen. It is found in the sarcoplasmic reticulum lumen. The protein resides in the melanosome. The catalysed reaction is ATP + H2O = ADP + phosphate + H(+). Its function is as follows. ATP-dependent chaperone involved in the processing of proteins in the endoplasmic reticulum, regulating their transport. Together with MESD, acts as a modulator of the Wnt pathway by promoting the folding of LRP6, a coreceptor of the canonical Wnt pathway. When associated with CNPY3, required for proper folding of Toll-like receptors. Promotes folding and trafficking of TLR4 to the cell surface. May participate in the unfolding of cytosolic leaderless cargos (lacking the secretion signal sequence) such as the interleukin 1/IL-1 to facilitate their translocation into the ERGIC (endoplasmic reticulum-Golgi intermediate compartment) and secretion; the translocation process is mediated by the cargo receptor TMED10. The sequence is that of Endoplasmin (HSP90B1) from Bos taurus (Bovine).